We begin with the raw amino-acid sequence, 174 residues long: Guided entry of tail-anchored proteins factor 1 (174 aa).

At 1 to 8 (MSSAAADH) the chain is on the lumenal side. A helical membrane pass occupies residues 9 to 29 (WAWLLVLSFVFGCNVLRVLLP). Residues 30–99 (SFSSFMSRVL…VKARTAQLAK (70 aa)) lie on the Cytoplasmic side of the membrane. Positions 39 to 94 (LQKDAEQESQMRAEIQDMKQELSTVNMMDEFARYARLERKINKMTDKLKTHVKART) form a coiled coil. Positions 39 to 97 (LQKDAEQESQMRAEIQDMKQELSTVNMMDEFARYARLERKINKMTDKLKTHVKARTAQL) are interaction with GET3/TRC40. A helical membrane pass occupies residues 100–120 (IKWVISVAFYVLQAALMISLI). Residues 121–148 (WKYYSVPVAVVPSKWITPLDRLVAFPTR) lie on the Lumenal side of the membrane. Residues 149-169 (VAGGVGITCWILVCNKVVAIV) traverse the membrane as a helical segment. Residues 170-174 (LHPFS) lie on the Cytoplasmic side of the membrane.

The protein belongs to the WRB/GET1 family. Component of the Golgi to ER traffic (GET) complex, which is composed of GET1/WRB, CAMLG/GET2 and GET3. Within the complex, GET1 and CAMLG form a heterotetramer which is stabilized by phosphatidylinositol binding and which binds to the GET3 homodimer. Interacts with CAMLG (via C-terminus). GET3 shows a higher affinity for CAMLG than for GET1.

The protein resides in the endoplasmic reticulum membrane. Required for the post-translational delivery of tail-anchored (TA) proteins to the endoplasmic reticulum. Together with CAMLG/GET2, acts as a membrane receptor for soluble GET3/TRC40, which recognizes and selectively binds the transmembrane domain of TA proteins in the cytosol. Required to ensure correct topology and ER insertion of CAMLG. This chain is Guided entry of tail-anchored proteins factor 1, found in Pongo abelii (Sumatran orangutan).